The primary structure comprises 682 residues: MAARSLGSGVGRLLRGLQGRSGQSGWSLSVSRSTATRLPGCVPAAAQPGSYPALSAQAAQEPAAFWGPLARDTLVWDTPYHTVWDCDFRTGKIGWFLGGQLNVSVNCLDQHVQKSPETIALIWERDEPGTEVRITYRELLETTCRLANTLKRHGVHRGDRVAIYMPVSPLAVAAMLACARIGAIHTVVFAGFSAESLAGRINDAKCKAVITFNQGLRGGRVVELKKIVDEAVKSCPTVQHVLVAHRTDTKVPMGSLDIPLEQEMAKEAPVCTPESMSSEDMLFMLYTSGSTGTPKGLVHTQAGYLLYAAMTHKLVFDYQPGDVFGCVADIGWITGHSYVVYGPLCNGATTVLFESTPVYPDAGRYWETVQRLKINQFYGAPTAVRLLLKYGDAWVKKYDRSSLRTLGSVGEPINHEAWEWLHKVVGDGRCTLVDTWWQTETGGICIAPRPSEDGAEILPGMAMRPFFGIVPVLMDEKGNVLEGGDVSGALCISQAWPGMARTIYGDHQRFVDAYFRAYPGYYFTGDGAHRTEGGYYQITGRMDDVINISGHRLGTAEIEDAMADHPAVPETAVIGYPHDIKGEAAFAFIVLKDNISDENMVVNELKLSVATKIAKYAVPDQILVVKRLPKTRSGKVMRRLLRKIITSRGQDLGDTTTLEDPSVITEILSAFQKYEEQRAATN.

Residues 1–38 (MAARSLGSGVGRLLRGLQGRSGQSGWSLSVSRSTATRL) constitute a mitochondrion transit peptide. CoA-binding positions include 217–220 (RGGR) and T334. K389 carries the N6-acetyllysine modification. ATP-binding positions include 410–412 (GEP), 434–439 (DTWWQT), D526, and R541. S549 is a CoA binding site. R552 contacts ATP. K635 bears the N6-acetyllysine mark.

It belongs to the ATP-dependent AMP-binding enzyme family. As to quaternary structure, interacts with SIRT3. Post-translationally, reversibly acetylated at Lys-635. The acetyl-CoA synthase activity is inhibited by acetylation and activated by deacetylation mediated by the deacetylase SIRT3. Highly expressed in heart, testis, kidney, skeletal muscle, lung and spleen. Detected at low levels in brain.

It localises to the mitochondrion matrix. It catalyses the reaction acetate + ATP + CoA = acetyl-CoA + AMP + diphosphate. The catalysed reaction is propanoate + ATP + CoA = propanoyl-CoA + AMP + diphosphate. Its activity is regulated as follows. Inhibited by acetylation at Lys-635 and activated by deacetylation mediated by the deacetylase SIRT3. Its function is as follows. Catalyzes the synthesis of acetyl-CoA from short-chain fatty acids. Acetate is the preferred substrate. Can also utilize propionate with a much lower affinity. Provides acetyl-CoA that is utilized mainly for oxidation under ketogenic conditions. Involved in thermogenesis under ketogenic conditions, using acetate as a vital fuel when carbohydrate availability is insufficient. In Mus musculus (Mouse), this protein is Acetyl-coenzyme A synthetase 2-like, mitochondrial (Acss1).